The primary structure comprises 229 residues: Protein AF_2251 (229 aa).

This sequence belongs to the CinA family.

This chain is Protein AF_2251, found in Archaeoglobus fulgidus (strain ATCC 49558 / DSM 4304 / JCM 9628 / NBRC 100126 / VC-16).